A 227-amino-acid polypeptide reads, in one-letter code: Uracil-DNA glycosylase (227 aa).

The Proton acceptor role is filled by D65.

The protein belongs to the uracil-DNA glycosylase (UDG) superfamily. UNG family.

The protein localises to the cytoplasm. The catalysed reaction is Hydrolyzes single-stranded DNA or mismatched double-stranded DNA and polynucleotides, releasing free uracil.. Functionally, excises uracil residues from the DNA which can arise as a result of misincorporation of dUMP residues by DNA polymerase or due to deamination of cytosine. The protein is Uracil-DNA glycosylase of Buchnera aphidicola subsp. Cinara cedri (strain Cc).